A 92-amino-acid chain; its full sequence is MSRSLKKGPFVADHLLKKVEKLNAQNDKKVITTWSRASTIVPVMIGHTIAVHNGREHIPVFVTDQMVGHKLGEFAPTRTFRGHKNSDKKAKR.

The protein belongs to the universal ribosomal protein uS19 family.

It localises to the plastid. The protein localises to the chloroplast. Protein S19 forms a complex with S13 that binds strongly to the 16S ribosomal RNA. The sequence is that of Small ribosomal subunit protein uS19c from Oltmannsiellopsis viridis (Marine flagellate).